A 256-amino-acid chain; its full sequence is Vesicle-associated protein 1-1 (256 aa).

The residue at position 1 (Met1) is an N-acetylmethionine. The Cytoplasmic segment spans residues 1–232; the sequence is MSNIDLIGMS…RRESKKSQSG (232 aa). Ser2 is subject to N-acetylserine; in Vesicle-associated protein 1-1, N-terminally processed. The 121-residue stretch at 22–142 folds into the MSP domain; it reads LLTVEPLDLQ…EETKLRVTYV (121 aa). Positions 142–169 are disordered; that stretch reads VAPPRPPSPVHEGSEEGSSPRASVSDNG. The residue at position 149 (Ser149) is a Phosphoserine. Positions 157-169 are enriched in polar residues; sequence EGSSPRASVSDNG. Residues 187–232 adopt a coiled-coil conformation; that stretch reads HQENTSEARALITKLTEEKQSAIQLNNRLQRELDQLRRESKKSQSG. The chain crosses the membrane as a helical; Anchor for type IV membrane protein span at residues 233–253; the sequence is GIPFMYVLLVGLIGLILGYIM.

This sequence belongs to the VAMP-associated protein (VAP) (TC 9.B.17) family. As to quaternary structure, homodimer or homooligomer. Interacts with the cowpea mosaic virus (CPMV) NTP-binding protein (NTB). Interacts with NET3C.

It is found in the endoplasmic reticulum membrane. It localises to the protein storage vacuole membrane. Its function is as follows. Part of a membrane-cytoskeletal adapter complex that forms a bridge between the endoplasmic reticulum and the plasma membrane. Associates with microtubules. The sequence is that of Vesicle-associated protein 1-1 (PVA11) from Arabidopsis thaliana (Mouse-ear cress).